A 217-amino-acid polypeptide reads, in one-letter code: MTVENTALTLKKRFRGYFPVVVDVETAGFNAQTDALLEICAVTLSMDENGDLHPASTIHFHVEPFEGANLEKEALEFNGIRDPFSPLRGAVTEQEALKEIYKLIRREQKAADCSRAIMVAHNAAFDLSFVNAANERCKLKRVPFHPFATFDTATLSGLAYGQTVLAKACKTAGMEFDNREAHSALYDTEKTAELFCGIVNKWKALGGWPLIEDENEK.

The 176-residue stretch at V20–F195 folds into the Exonuclease domain. The Mg(2+) site is built by D23, E25, H182, and D187. H182 (proton donor/acceptor) is an active-site residue.

The protein belongs to the RNase T family. Homodimer. Mg(2+) serves as cofactor.

Its function is as follows. Trims short 3' overhangs of a variety of RNA species, leaving a one or two nucleotide 3' overhang. Responsible for the end-turnover of tRNA: specifically removes the terminal AMP residue from uncharged tRNA (tRNA-C-C-A). Also appears to be involved in tRNA biosynthesis. This chain is Ribonuclease T, found in Vibrio vulnificus (strain YJ016).